The following is a 231-amino-acid chain: Large ribosomal subunit protein uL1 (231 aa).

This sequence belongs to the universal ribosomal protein uL1 family. Part of the 50S ribosomal subunit.

Functionally, binds directly to 23S rRNA. The L1 stalk is quite mobile in the ribosome, and is involved in E site tRNA release. Its function is as follows. Protein L1 is also a translational repressor protein, it controls the translation of the L11 operon by binding to its mRNA. This chain is Large ribosomal subunit protein uL1, found in Mesomycoplasma hyopneumoniae (strain 232) (Mycoplasma hyopneumoniae).